The chain runs to 521 residues: Histidine--tRNA ligase (521 aa).

L-histidine is bound by residues 137–139, R164, Q180, D184, R338, and 342–343; these read DLT and YY.

The protein belongs to the class-II aminoacyl-tRNA synthetase family.

It catalyses the reaction tRNA(His) + L-histidine + ATP = L-histidyl-tRNA(His) + AMP + diphosphate + H(+). Functionally, involved in protein synthesis. Catalyzes the specific attachment of an amino acid to its cognate tRNA in a 2 step reaction: the amino acid (AA) is first activated by ATP to form AA-AMP and then transferred to the acceptor end of the tRNA. Required for germ cell development. This is Histidine--tRNA ligase from Caenorhabditis elegans.